The chain runs to 493 residues: Accumulates dyads protein 4 (493 aa).

Interacts with CNM67, SPO21/MPC70 and NUD1.

It is found in the cytoplasm. The protein resides in the cytoskeleton. The protein localises to the microtubule organizing center. Its subcellular location is the spindle pole body. In terms of biological role, involved in the pathway that organizes the shaping and sizing of the prospore membrane (PSM) during sporulation. May be required to stabilize the outer plaque of the spindle pole body (SPB). The chain is Accumulates dyads protein 4 (ADY4) from Saccharomyces cerevisiae (strain ATCC 204508 / S288c) (Baker's yeast).